Here is a 196-residue protein sequence, read N- to C-terminus: Holliday junction branch migration complex subunit RuvA (196 aa).

Residues 1 to 63 form a domain I region; it reads MINKIHGKVI…ENELKLFGFL (63 aa). The tract at residues 64–139 is domain II; that stretch reads NSDERETFKS…KLLINNELES (76 aa). Position 139 (S139) is a region of interest, flexible linker. Residues 139–196 are domain III; it reads SSLFGFKELEESIVSMGFDRKIVNSKLKEACDLIEFSNLKDSEKEQFLFKEVLKRMSN.

Belongs to the RuvA family. In terms of assembly, homotetramer. Forms an RuvA(8)-RuvB(12)-Holliday junction (HJ) complex. HJ DNA is sandwiched between 2 RuvA tetramers; dsDNA enters through RuvA and exits via RuvB. An RuvB hexamer assembles on each DNA strand where it exits the tetramer. Each RuvB hexamer is contacted by two RuvA subunits (via domain III) on 2 adjacent RuvB subunits; this complex drives branch migration. In the full resolvosome a probable DNA-RuvA(4)-RuvB(12)-RuvC(2) complex forms which resolves the HJ.

The protein localises to the cytoplasm. Its function is as follows. The RuvA-RuvB-RuvC complex processes Holliday junction (HJ) DNA during genetic recombination and DNA repair, while the RuvA-RuvB complex plays an important role in the rescue of blocked DNA replication forks via replication fork reversal (RFR). RuvA specifically binds to HJ cruciform DNA, conferring on it an open structure. The RuvB hexamer acts as an ATP-dependent pump, pulling dsDNA into and through the RuvAB complex. HJ branch migration allows RuvC to scan DNA until it finds its consensus sequence, where it cleaves and resolves the cruciform DNA. The sequence is that of Holliday junction branch migration complex subunit RuvA from Borrelia garinii subsp. bavariensis (strain ATCC BAA-2496 / DSM 23469 / PBi) (Borreliella bavariensis).